The chain runs to 427 residues: Interferon regulatory factor 3 (427 aa).

Residue Thr3 is modified to Phosphothreonine. The segment at residues 5 to 111 is a DNA-binding region (IRF tryptophan pentad repeat); sequence KPRILPWLVS…DPHKIYEFVN (107 aa). Ser14 carries the post-translational modification Phosphoserine. Thr75 is modified (phosphothreonine). Residues 91-107 show a composition bias toward basic and acidic residues; that stretch reads RLAEDRSKDPHDPHKIY. Positions 91–136 are disordered; that stretch reads RLAEDRSKDPHDPHKIYEFVNSGVGDFSQPDTSPDTNGGGSTSDTQ. A phosphoserine mark is found at Ser97 and Ser123. A Nuclear export signal motif is present at residues 139–149; the sequence is ILDELLGNMVL. The segment at 141-427 is mediates interaction with ZDHHC11; sequence DELLGNMVLA…GMDFQGPGES (287 aa). Ser175 carries the (Microbial infection) Phosphoserine modification. A Phosphothreonine modification is found at Thr180. Phosphoserine is present on Ser188. Lys193 participates in a covalent cross-link: Glycyl lysine isopeptide (Lys-Gly) (interchain with G-Cter in ISG15). The tract at residues 200 to 360 is interaction with HERC5; the sequence is EEWEFEVTAF…SWPQDQPWTK (161 aa). Phosphothreonine occurs at positions 237, 244, and 253. Cys267 and Cys289 are disulfide-bonded. Residues Lys360 and Lys366 each participate in a glycyl lysine isopeptide (Lys-Gly) (interchain with G-Cter in ISG15) cross-link. N6-acetyllysine is present on Lys366. At Ser385 the chain carries Phosphoserine. Ser386 is subject to Diphosphoserine. The residue at position 386 (Ser386) is a Phosphoserine; by TBK1. Ser396 carries the phosphoserine; by IKKE and TBK1 modification. The residue at position 398 (Ser398) is a Phosphoserine. At Thr404 the chain carries Phosphothreonine. At Ser427 the chain carries Phosphoserine.

This sequence belongs to the IRF family. As to quaternary structure, monomer. Homodimer; phosphorylation-induced. Interacts (when phosphorylated) with CREBBP. Interacts with MAVS (via phosphorylated pLxIS motif). Interacts with TICAM1 (via phosphorylated pLxIS motif). Interacts with STING1 (via phosphorylated pLxIS motif). Interacts with IKBKE and TBK1. Interacts with TICAM2. Interacts with RBCK1. Interacts with HERC5. Interacts with DDX3X (phosphorylated at 'Ser-102'); the interaction allows the phosphorylation and activation of IRF3 by IKBKE. Interacts with TRIM21 and ULK1, in the presence of TRIM21; this interaction leads to IRF3 degradation by autophagy. Interacts with RIOK3; RIOK3 probably mediates the interaction of TBK1 with IRF3. Interacts with ILRUN; the interaction inhibits IRF3 binding to its DNA consensus sequence. Interacts with LYAR; this interaction impairs IRF3 DNA-binding activity. Interacts with TRAF3. Interacts with ZDHHC11; ZDHHC11 recruits IRF3 to STING1 upon DNA virus infection and thereby promotes IRF3 activation. Interacts with HSP90AA1; the interaction mediates IRF3 association with TOMM70. Interacts with BCL2; the interaction decreases upon Sendai virus infection. Interacts with BAX; the interaction is direct, increases upon Sendai virus infection and mediates the formation of the apoptosis complex TOMM70:HSP90AA1:IRF3:BAX. Interacts with DDX56. Interacts with NBR1. (Microbial infection) Interacts with rotavirus A NSP1 (via pLxIS motif); this interaction leads to the proteasome-dependent degradation of IRF3. In terms of assembly, (Microbial infection) Interacts with herpes virus 8/HHV-8 protein VIRF1. As to quaternary structure, (Microbial infection) Interacts with Seneca Valley virus protease 3C; this interaction is involved in the suppression of IRF3 expression and phosphorylation by the virus. (Microbial infection) Interacts with herpes virus 2/HHV-2 protein ICP27; this interaction inhibits IRF3 phosphorylation and nuclear translocation. In terms of assembly, (Microbial infection) Interacts with human cytomegalovirus protein UL44; this interaction prevents IRF3 binding to its promoters. As to quaternary structure, (Microbial infection) Interacts with the two fragments of MERS-COV protein N produced by CASP6 through proteolytic cleavage; both interactions inhibit IRF3 nuclear translocation after activation and IFN signaling. Constitutively phosphorylated on many Ser/Thr residues. Activated following phosphorylation by TBK1 and IKBKE. Innate adapter proteins, such as MAVS, STING1 or TICAM1, are first activated by viral RNA, cytosolic DNA, and bacterial lipopolysaccharide (LPS), respectively, leading to activation of the kinases TBK1 and IKBKE. These kinases then phosphorylate the adapter proteins on the pLxIS motif, leading to recruitment of IRF3, thereby licensing IRF3 for phosphorylation by TBK1. Phosphorylation at Ser-386 is followed by pyrophosphorylation at the same residue, promoting phosphorylation at Ser-396. Phosphorylated IRF3 dissociates from the adapter proteins, dimerizes, and then enters the nucleus to induce IFNs. In terms of processing, pyrophosphorylated by UAP1 following phosphorylation at Ser-386 by TBK1. Pyrophosphorylation promotes subsequent phosphorylation at Ser-396, leading to homodimerization of IRF3. Post-translationally, acetylation at Lys-366 by KAT8 inhibits recruimtent to promoters and transcription factor activity. Acetylation by KAT8 is promoted by phosphorylation at Ser-396. Ubiquitinated; ubiquitination involves RBCK1 leading to proteasomal degradation. Polyubiquitinated; ubiquitination involves TRIM21 leading to proteasomal degradation. Ubiquitinated by UBE3C, leading to its degradation. Deubiquitinated by USP5 on both 'Lys-48'-linked unanchored and 'Lys-63'-linked anchored polyubiquitin, leading to inhibition of anti-RNA viral innate immunity. In terms of processing, ISGylated by HERC5 resulting in sustained IRF3 activation and in the inhibition of IRF3 ubiquitination by disrupting PIN1 binding. The phosphorylation state of IRF3 does not alter ISGylation. Post-translationally, proteolytically cleaved by apoptotic caspases during apoptosis, leading to its inactivation. Cleavage by CASP3 during virus-induced apoptosis inactivates it, preventing cytokine overproduction. (Microbial infection) ISGylated. ISGylation is cleaved and removed by SARS-COV-2 nsp3 which attenuates type I interferon responses. In terms of processing, (Microbial infection) Phosphorylation and subsequent activation of IRF3 is inhibited by vaccinia virus protein E3. Post-translationally, (Microbial infection) Phosphorylated by herpes simplex virus 1/HHV-1 US3 at Ser-175 to prevent IRF3 activation. Expressed constitutively in a variety of tissues.

It is found in the cytoplasm. It localises to the nucleus. Its subcellular location is the mitochondrion. Its activity is regulated as follows. In the absence of viral infection, maintained as a monomer in an autoinhibited state. Phosphorylation by TBK1 and IKBKE disrupts this autoinhibition leading to the liberation of the DNA-binding and dimerization activities and its nuclear localization where it can activate type I IFN and ISG genes. Phosphorylation and activation follow the following steps: innate adapter proteins, such as MAVS, STING1 or TICAM1, are first activated by viral RNA, cytosolic DNA and bacterial lipopolysaccharide (LPS), respectively, leading to activation of the kinases TBK1 and IKBKE. These kinases then phosphorylate the adapter proteins on their pLxIS motif, leading to recruitment of IRF3, thereby licensing IRF3 for phosphorylation by TBK1. Phosphorylated IRF3 dissociates from the adapter proteins, dimerizes, and then enters the nucleus to induce IFNs. With respect to regulation, (Microbial infection) Activated upon coronavirus SARS-CoV-2 infection. Functionally, key transcriptional regulator of type I interferon (IFN)-dependent immune responses which plays a critical role in the innate immune response against DNA and RNA viruses. Regulates the transcription of type I IFN genes (IFN-alpha and IFN-beta) and IFN-stimulated genes (ISG) by binding to an interferon-stimulated response element (ISRE) in their promoters. Acts as a more potent activator of the IFN-beta (IFNB) gene than the IFN-alpha (IFNA) gene and plays a critical role in both the early and late phases of the IFNA/B gene induction. Found in an inactive form in the cytoplasm of uninfected cells and following viral infection, double-stranded RNA (dsRNA), or toll-like receptor (TLR) signaling, is phosphorylated by IKBKE and TBK1 kinases. This induces a conformational change, leading to its dimerization and nuclear localization and association with CREB binding protein (CREBBP) to form dsRNA-activated factor 1 (DRAF1), a complex which activates the transcription of the type I IFN and ISG genes. Can activate distinct gene expression programs in macrophages and can induce significant apoptosis in primary macrophages. In response to Sendai virus infection, is recruited by TOMM70:HSP90AA1 to mitochondrion and forms an apoptosis complex TOMM70:HSP90AA1:IRF3:BAX inducing apoptosis. Key transcription factor regulating the IFN response during SARS-CoV-2 infection. The chain is Interferon regulatory factor 3 from Homo sapiens (Human).